The chain runs to 286 residues: Beta-glucanase (286 aa).

Residues 1 to 30 form the signal peptide; sequence MCTMPLMKLKKMMRRTAFLLSVLIGCSMLG. Residues 48–286 enclose the GH16 domain; the sequence is FDYSGLPDPE…DYVRVYRWVE (239 aa). Glu-158 functions as the Nucleophile in the catalytic mechanism. Glu-163 (proton donor) is an active-site residue.

The protein belongs to the glycosyl hydrolase 16 family.

The catalysed reaction is Hydrolysis of (1-&gt;4)-beta-D-glucosidic linkages in beta-D-glucans containing (1-&gt;3)- and (1-&gt;4)-bonds.. Functionally, shows activity on lichenan, beta-glucan and laminarin but not on CMC cellulose or xylan. In Rhodothermus marinus (Rhodothermus obamensis), this protein is Beta-glucanase (bglA).